Here is a 94-residue protein sequence, read N- to C-terminus: UPF0298 protein SEQ_1830 (94 aa).

This sequence belongs to the UPF0298 family.

Its subcellular location is the cytoplasm. In Streptococcus equi subsp. equi (strain 4047), this protein is UPF0298 protein SEQ_1830.